The primary structure comprises 289 residues: Glycine--tRNA ligase alpha subunit (289 aa).

It belongs to the class-II aminoacyl-tRNA synthetase family. In terms of assembly, tetramer of two alpha and two beta subunits.

Its subcellular location is the cytoplasm. The catalysed reaction is tRNA(Gly) + glycine + ATP = glycyl-tRNA(Gly) + AMP + diphosphate. This Prochlorococcus marinus (strain MIT 9515) protein is Glycine--tRNA ligase alpha subunit.